A 455-amino-acid chain; its full sequence is Protein king tubby (455 aa).

A disordered region spans residues 35-92 (RPMSGMRGNSRELHAYDGPMQFIGSPHNPDQILSNNSSSVHLSSSMNSSRNNSNNLRS). The segment covering 67-92 (LSNNSSSVHLSSSMNSSRNNSNNLRS) has biased composition (low complexity). The residue at position 144 (Ser144) is a Phosphoserine.

This sequence belongs to the TUB family.

Its subcellular location is the cytoplasm. It is found in the nucleus. It localises to the cell projection. The protein localises to the cilium membrane. The protein resides in the rhabdomere. This is Protein king tubby from Drosophila virilis (Fruit fly).